The chain runs to 1080 residues: Myocardin-related transcription factor B (1080 aa).

The stretch at 40 to 65 (EVLQLRLQQRRTREQLVDQGIMPPLK) is one RPEL 1 repeat. Serine 66 carries the post-translational modification Phosphoserine. RPEL repeat units lie at residues 84–109 (NFLKHKIRSRPDRSELVRMHILEETF) and 128–153 (DDLNEKIAQRPGPMELVEKNILPVDS). Disordered stretches follow at residues 170-222 (THGE…AQFT), 234-311 (TPLT…EPQM), 352-384 (PIKTDKNSSSGSNSGSSSSMPARRPGPLPSSLD), and 477-501 (PHVENAHSPLPISPSPSEQSSLSTD). Polar residues-rich tracts occupy residues 188–200 (QPASQESQGSAAS) and 240–259 (QPPTRSTAPVLPTNTVSSAK). The segment covering 272-287 (NPNDKHRSKKCKDPKP) has biased composition (basic and acidic residues). The span at 358 to 370 (NSSSGSNSGSSSS) shows a compositional bias: low complexity. Residues 383-417 (LDDLKVSELKTELKLRGLPVSGTKPDLIERLKPYQ) form the SAP domain. Residues serine 531, serine 535, and serine 537 each carry the phosphoserine modification. A coiled-coil region spans residues 539-594 (SSSTLSTLELDAAEKDRKLQEKEKQIEELKRKLEQEQKLVEVLKMQLEVEKRGQQR). Residues 557–585 (LQEKEKQIEELKRKLEQEQKLVEVLKMQL) form a required for interaction with itself and with MRTFA region. Disordered regions lie at residues 588 to 646 (EKRG…SVGQ) and 794 to 846 (LQYQ…PQQF). A compositionally biased stretch (pro residues) spans 595–606 (PPDPQPSDPPHP). A Glycyl lysine isopeptide (Lys-Gly) (interchain with G-Cter in SUMO1) cross-link involves residue lysine 622. Residues 794-821 (LQYQRQPGPTNQQPFVSKTSNPALQSRT) are compositionally biased toward polar residues. Serine 913 is modified (phosphoserine). Positions 969 to 988 (GTLPSATDTGPLQNSSEDRE) are disordered. Polar residues predominate over residues 972–983 (PSATDTGPLQNS).

In terms of assembly, interacts with MRTFA and SRF. In terms of processing, O-glycosylated. In terms of tissue distribution, widely expressed. High expression in heart, brain and testis. Lower expression in lung, liver and kidney.

The protein localises to the nucleus. Acts as a transcriptional coactivator of serum response factor (SRF). Required for skeletal myogenic differentiation. The protein is Myocardin-related transcription factor B (Mrtfb) of Mus musculus (Mouse).